Here is a 199-residue protein sequence, read N- to C-terminus: Recombination protein RecR (199 aa).

The segment at Cys-56 to Cys-71 adopts a C4-type zinc-finger fold. Residues Ser-79 to Pro-174 enclose the Toprim domain.

It belongs to the RecR family.

In terms of biological role, may play a role in DNA repair. It seems to be involved in an RecBC-independent recombinational process of DNA repair. It may act with RecF and RecO. This Frankia casuarinae (strain DSM 45818 / CECT 9043 / HFP020203 / CcI3) protein is Recombination protein RecR.